The sequence spans 252 residues: Flagellar brake protein YcgR (252 aa).

Residues 118–236 (QRREYFRVSI…EKGLQRAIFE (119 aa)) form the PilZ domain.

It belongs to the YcgR family. In terms of assembly, monomer. Interacts with the flagellar basal bodies.

Its subcellular location is the bacterial flagellum basal body. Functionally, acts as a flagellar brake, regulating swimming and swarming in a bis-(3'-5') cyclic diguanylic acid (c-di-GMP)-dependent manner. Binds 1 c-di-GMP dimer per subunit. Increasing levels of c-di-GMP lead to decreased motility. This Yersinia pseudotuberculosis serotype I (strain IP32953) protein is Flagellar brake protein YcgR.